The primary structure comprises 214 residues: Late embryogenesis abundant protein At1g64065 (214 aa).

A helical transmembrane segment spans residues 41 to 61; that stretch reads VYSLTIIVIIFALCLILSSIF.

Belongs to the LEA type 2 family.

The protein localises to the membrane. The chain is Late embryogenesis abundant protein At1g64065 from Arabidopsis thaliana (Mouse-ear cress).